Reading from the N-terminus, the 349-residue chain is Ribosomal RNA small subunit methyltransferase H (349 aa).

S-adenosyl-L-methionine contacts are provided by residues 34–36 (GGH), aspartate 54, phenylalanine 81, aspartate 102, and glutamine 109. Residues 328-349 (SRTGSVQHGQAKHKGVVQRGGS) are disordered.

The protein belongs to the methyltransferase superfamily. RsmH family.

Its subcellular location is the cytoplasm. It carries out the reaction cytidine(1402) in 16S rRNA + S-adenosyl-L-methionine = N(4)-methylcytidine(1402) in 16S rRNA + S-adenosyl-L-homocysteine + H(+). Functionally, specifically methylates the N4 position of cytidine in position 1402 (C1402) of 16S rRNA. The polypeptide is Ribosomal RNA small subunit methyltransferase H (Dehalococcoides mccartyi (strain ATCC BAA-2100 / JCM 16839 / KCTC 5957 / BAV1)).